Here is a 583-residue protein sequence, read N- to C-terminus: Laminarase-resistance protein LRE1 (583 aa).

Positions 1 to 24 are enriched in polar residues; the sequence is MPNTHTQHVQISEPNPVNTLSTPS. Disordered stretches follow at residues 1–31 and 330–380; these read MPNT…HRHR and LKDN…HMQH. Composition is skewed to basic and acidic residues over residues 332–342 and 354–366; these read DNPRYAKDGYP and LDSD…SGES. 2 positions are modified to phosphoserine: S393 and S398. The interval 457–486 is disordered; sequence SCTPDGKEEMNRLKSNDSNEYSKSEGQIRT. Over residues 461-479 the composition is skewed to basic and acidic residues; the sequence is DGKEEMNRLKSNDSNEYSK. A phosphoserine mark is found at S516 and S552.

Phosphorylated by CDC28/CDK1.

In terms of biological role, overexpression affects chitinase expression, cell separation and budding pattern, and increases trehalose accumulation and heat resistance by inhibiting protein kinase CBK1. Overexpression also suppresses temperature-induced hyperosmosensitivity and sensitivity to cell wall degrading enzymes. Overexpression of both LRE1 and PBN1 confers resistance to laminarinase. This is Laminarase-resistance protein LRE1 (LRE1) from Saccharomyces cerevisiae (strain ATCC 204508 / S288c) (Baker's yeast).